A 373-amino-acid chain; its full sequence is Protein-glutamate methylesterase/protein-glutamine glutaminase 2 (373 aa).

The Response regulatory domain maps to 4–121 (KVLVVDDSGF…SRNPEKVKQL (118 aa)). Asp55 carries the post-translational modification 4-aspartylphosphate. The disordered stretch occupies residues 136-181 (FSSYSAPAPQPASAPAPAPSSFASSRSPAPAPAPARAAAPAASANS). The span at 143–153 (APQPASAPAPA) shows a compositional bias: pro residues. Residues 154-181 (PSSFASSRSPAPAPAPARAAAPAASANS) are compositionally biased toward low complexity. One can recognise a CheB-type methylesterase domain in the interval 182-370 (PAPKRKAYKL…LDDIGRHLVE (189 aa)). Active-site residues include Ser197, His224, and Asp317.

The protein belongs to the CheB family. In terms of processing, phosphorylated by CheA. Phosphorylation of the N-terminal regulatory domain activates the methylesterase activity.

The protein resides in the cytoplasm. The catalysed reaction is [protein]-L-glutamate 5-O-methyl ester + H2O = L-glutamyl-[protein] + methanol + H(+). It catalyses the reaction L-glutaminyl-[protein] + H2O = L-glutamyl-[protein] + NH4(+). Its function is as follows. Involved in chemotaxis. Part of a chemotaxis signal transduction system that modulates chemotaxis in response to various stimuli. Catalyzes the demethylation of specific methylglutamate residues introduced into the chemoreceptors (methyl-accepting chemotaxis proteins or MCP) by CheR. Also mediates the irreversible deamidation of specific glutamine residues to glutamic acid. The polypeptide is Protein-glutamate methylesterase/protein-glutamine glutaminase 2 (Pseudomonas fluorescens (strain ATCC BAA-477 / NRRL B-23932 / Pf-5)).